Reading from the N-terminus, the 431-residue chain is UDP-N-acetylmuramate--L-alanine ligase (431 aa).

108 to 114 (GAHGKST) contacts ATP.

The protein belongs to the MurCDEF family.

It is found in the cytoplasm. It carries out the reaction UDP-N-acetyl-alpha-D-muramate + L-alanine + ATP = UDP-N-acetyl-alpha-D-muramoyl-L-alanine + ADP + phosphate + H(+). Its pathway is cell wall biogenesis; peptidoglycan biosynthesis. Its function is as follows. Cell wall formation. This is UDP-N-acetylmuramate--L-alanine ligase from Campylobacter jejuni subsp. jejuni serotype O:23/36 (strain 81-176).